The sequence spans 173 residues: Telomerase RNA component interacting RNase (173 aa).

Over residues 1–12 the composition is skewed to basic and acidic residues; it reads MAARGRRAEPPG. Positions 1-119 are disordered; it reads MAARGRRAEP…LSFVGKRRGG (119 aa). Composition is skewed to low complexity over residues 14 to 23 and 43 to 52; these read EAPGPAGSGR and SGSSPVSSGV. A compositionally biased stretch (basic and acidic residues) spans 64–79; it reads LFKRKMEEEQRQRQEE. The span at 80–90 shows a compositional bias: pro residues; it reads PPPGPQRPDPP. An N6-acetyllysine modification is found at lysine 143.

As to quaternary structure, part of the telomerase RNA 3' end complex which contains about 488 proteins.

Exoribonuclease that is part of the telomerase RNA 3' end processing complex and which has the ability to cleave all four unpaired RNA nucleotides from the 5' end or 3' end with higher efficiency for purine bases. This is Telomerase RNA component interacting RNase from Mus musculus (Mouse).